The primary structure comprises 62 residues: Large ribosomal subunit protein uL30 (62 aa).

It belongs to the universal ribosomal protein uL30 family. In terms of assembly, part of the 50S ribosomal subunit.

The chain is Large ribosomal subunit protein uL30 from Hydrogenovibrio crunogenus (strain DSM 25203 / XCL-2) (Thiomicrospira crunogena).